Consider the following 252-residue polypeptide: Imidazole glycerol phosphate synthase subunit HisF (252 aa).

Active-site residues include Asp11 and Asp130.

Belongs to the HisA/HisF family. Heterodimer of HisH and HisF.

It is found in the cytoplasm. It carries out the reaction 5-[(5-phospho-1-deoxy-D-ribulos-1-ylimino)methylamino]-1-(5-phospho-beta-D-ribosyl)imidazole-4-carboxamide + L-glutamine = D-erythro-1-(imidazol-4-yl)glycerol 3-phosphate + 5-amino-1-(5-phospho-beta-D-ribosyl)imidazole-4-carboxamide + L-glutamate + H(+). It functions in the pathway amino-acid biosynthesis; L-histidine biosynthesis; L-histidine from 5-phospho-alpha-D-ribose 1-diphosphate: step 5/9. Functionally, IGPS catalyzes the conversion of PRFAR and glutamine to IGP, AICAR and glutamate. The HisF subunit catalyzes the cyclization activity that produces IGP and AICAR from PRFAR using the ammonia provided by the HisH subunit. The polypeptide is Imidazole glycerol phosphate synthase subunit HisF (Sulfurihydrogenibium sp. (strain YO3AOP1)).